The sequence spans 306 residues: MPDSQTSNSSTNAPVTGTAHVKRGMAEMLKGGVIMDVVTAEQAKIAEDAGAVAVMALERVPSDIRAQGGVSRMSDPDMIDSIMDAVSIPVMAKVRIGHFVEAQILQSLGVDYVDESEVLTPADYANHVDKWAFTVPFVCGATNLGEALRRITEGAAMIRSKGEAGTGDVSNATTHMRGIRTEIRRLQSLPTDELYLAAKDLQAPYELVKEIAETGKLPVVLFTAGGIATPADAAMMMQLGAEGVFVGSGIFKSDNPAHRAAAIVKATTFHDDPETLAKISRGLGEAMVGINAGTLSQSDRLAERGR.

D36 contacts D-ribose 5-phosphate. K93 acts as the Schiff-base intermediate with D-ribose 5-phosphate in catalysis. Position 165 (G165) interacts with D-ribose 5-phosphate. R177 contacts D-glyceraldehyde 3-phosphate. Residues G226 and 247–248 contribute to the D-ribose 5-phosphate site; that span reads GS.

It belongs to the PdxS/SNZ family. In terms of assembly, in the presence of PdxT, forms a dodecamer of heterodimers.

The catalysed reaction is aldehydo-D-ribose 5-phosphate + D-glyceraldehyde 3-phosphate + L-glutamine = pyridoxal 5'-phosphate + L-glutamate + phosphate + 3 H2O + H(+). The protein operates within cofactor biosynthesis; pyridoxal 5'-phosphate biosynthesis. Functionally, catalyzes the formation of pyridoxal 5'-phosphate from ribose 5-phosphate (RBP), glyceraldehyde 3-phosphate (G3P) and ammonia. The ammonia is provided by the PdxT subunit. Can also use ribulose 5-phosphate and dihydroxyacetone phosphate as substrates, resulting from enzyme-catalyzed isomerization of RBP and G3P, respectively. This Salinispora tropica (strain ATCC BAA-916 / DSM 44818 / JCM 13857 / NBRC 105044 / CNB-440) protein is Pyridoxal 5'-phosphate synthase subunit PdxS.